The sequence spans 173 residues: Large ribosomal subunit protein uL18 (173 aa).

It belongs to the universal ribosomal protein uL18 family. In terms of assembly, part of the 50S ribosomal subunit. Contacts the 5S and 23S rRNAs.

Functionally, this is one of the proteins that bind and probably mediate the attachment of the 5S RNA into the large ribosomal subunit, where it forms part of the central protuberance. In Methanococcoides burtonii (strain DSM 6242 / NBRC 107633 / OCM 468 / ACE-M), this protein is Large ribosomal subunit protein uL18.